The chain runs to 134 residues: Large ribosomal subunit protein uL22 (134 aa).

This sequence belongs to the universal ribosomal protein uL22 family. In terms of assembly, part of the 50S ribosomal subunit.

This protein binds specifically to 23S rRNA; its binding is stimulated by other ribosomal proteins, e.g. L4, L17, and L20. It is important during the early stages of 50S assembly. It makes multiple contacts with different domains of the 23S rRNA in the assembled 50S subunit and ribosome. Functionally, the globular domain of the protein is located near the polypeptide exit tunnel on the outside of the subunit, while an extended beta-hairpin is found that lines the wall of the exit tunnel in the center of the 70S ribosome. This Rhodococcus jostii (strain RHA1) protein is Large ribosomal subunit protein uL22.